The primary structure comprises 428 residues: Serine--tRNA ligase (428 aa).

231–233 (TAE) is an L-serine binding site. An ATP-binding site is contributed by 262 to 264 (RSE). Position 285 (Glu-285) interacts with L-serine. 349–352 (EISS) is an ATP binding site. Ser-385 lines the L-serine pocket.

Belongs to the class-II aminoacyl-tRNA synthetase family. Type-1 seryl-tRNA synthetase subfamily. As to quaternary structure, homodimer. The tRNA molecule binds across the dimer.

It localises to the cytoplasm. The enzyme catalyses tRNA(Ser) + L-serine + ATP = L-seryl-tRNA(Ser) + AMP + diphosphate + H(+). It catalyses the reaction tRNA(Sec) + L-serine + ATP = L-seryl-tRNA(Sec) + AMP + diphosphate + H(+). The protein operates within aminoacyl-tRNA biosynthesis; selenocysteinyl-tRNA(Sec) biosynthesis; L-seryl-tRNA(Sec) from L-serine and tRNA(Sec): step 1/1. Catalyzes the attachment of serine to tRNA(Ser). Is also able to aminoacylate tRNA(Sec) with serine, to form the misacylated tRNA L-seryl-tRNA(Sec), which will be further converted into selenocysteinyl-tRNA(Sec). The protein is Serine--tRNA ligase of Staphylococcus aureus (strain MRSA252).